Reading from the N-terminus, the 418-residue chain is Glutamyl-tRNA reductase (418 aa).

Residues 49–52 (TCNR), S109, 114–116 (EPQ), and Q120 each bind substrate. C50 serves as the catalytic Nucleophile. NADP(+) is bound at residue 189-194 (GAGETI).

Belongs to the glutamyl-tRNA reductase family. As to quaternary structure, homodimer.

The catalysed reaction is (S)-4-amino-5-oxopentanoate + tRNA(Glu) + NADP(+) = L-glutamyl-tRNA(Glu) + NADPH + H(+). It participates in porphyrin-containing compound metabolism; protoporphyrin-IX biosynthesis; 5-aminolevulinate from L-glutamyl-tRNA(Glu): step 1/2. Catalyzes the NADPH-dependent reduction of glutamyl-tRNA(Glu) to glutamate 1-semialdehyde (GSA). The polypeptide is Glutamyl-tRNA reductase (Klebsiella pneumoniae (strain 342)).